A 175-amino-acid polypeptide reads, in one-letter code: Transcriptional repressor NrdR (175 aa).

Residues 3–34 (CPICQDTNSRVLESRSAESGKSIRRRRECMNC) fold into a zinc finger. The region spanning 49–139 (ITIIKRDGKK…VYRKFQGIRD (91 aa)) is the ATP-cone domain.

Belongs to the NrdR family. Requires Zn(2+) as cofactor.

Functionally, negatively regulates transcription of bacterial ribonucleotide reductase nrd genes and operons by binding to NrdR-boxes. This Trichodesmium erythraeum (strain IMS101) protein is Transcriptional repressor NrdR.